The chain runs to 521 residues: Methionine--tRNA ligase (521 aa).

A 'HIGH' region motif is present at residues Y14–H24. The Zn(2+) site is built by C129, C132, C151, and H155. The 'KMSKS' region motif lies at K306 to S310. K309 is a binding site for ATP.

Belongs to the class-I aminoacyl-tRNA synthetase family. MetG type 2A subfamily. As to quaternary structure, monomer. The cofactor is Zn(2+).

It is found in the cytoplasm. It carries out the reaction tRNA(Met) + L-methionine + ATP = L-methionyl-tRNA(Met) + AMP + diphosphate. Functionally, is required not only for elongation of protein synthesis but also for the initiation of all mRNA translation through initiator tRNA(fMet) aminoacylation. This is Methionine--tRNA ligase from Ureaplasma parvum serovar 3 (strain ATCC 700970).